Reading from the N-terminus, the 518-residue chain is MGVFRFISISLAAVSAANAAQILSMPHAQTVPNSYIVMMKDDTSDDDFNHHQSWLQSTHTHNITRRATIQNAGMRHKYNFSKMKGYSGIFDEETIKDIAKDPKVMFVEPDTIISVHGKVEQSNVPSWGLARISNPQPGAGSYIYDSSAGEGITVYSVDTGVDVNHEDFEGRAIWGSNQVNDGDDRDGSGHGTHTSGTMVGKEFGIAKKAKLVAVKVLGNDGSGPTSGIVAGINWSVEHARQNGGTKKAVMNMSLGGSSSSALNRAAAQAVEQGMFLSVAAGNDNQDAQSSSPASEPSVCTVGSSAEDDSRSSFSNWGPAIDLFAPGSNIISARPGGGSQSMSGTSMAAPHVAGLAAYLMALEGISGGAVCDRLKELGTSSITDAGPGTPTNVLINNGGAKGGKPNPNPAPSPSPSPSQPSEPQQPTPSQPGQPGEPFPGEPQQPTPSQPGQPGEPFPGEPFPGEPFPGEPFPGESAPAPAPQHPHTPYPGGDNFDFDGFWKKYFGGEHWRKMFSSFWN.

Residues 1 to 19 (MGVFRFISISLAAVSAANA) form the signal peptide. Positions 20 to 116 (AQILSMPHAQ…VEPDTIISVH (97 aa)) are excised as a propeptide. One can recognise an Inhibitor I9 domain in the interval 34 to 115 (SYIVMMKDDT…FVEPDTIISV (82 aa)). Residues 126–400 (SWGLARISNP…NVLINNGGAK (275 aa)) form the Peptidase S8 domain. Active-site charge relay system residues include Asp158 and His190. The interval 175–198 (GSNQVNDGDDRDGSGHGTHTSGTM) is disordered. N-linked (GlcNAc...) asparagine glycans are attached at residues Asn233 and Asn251. Positions 282–294 (NDNQDAQSSSPAS) are enriched in polar residues. Residues 282-312 (NDNQDAQSSSPASEPSVCTVGSSAEDDSRSS) form a disordered region. Residue Ser345 is the Charge relay system of the active site. A compositionally biased stretch (polar residues) spans 378–394 (TSSITDAGPGTPTNVLI). Residues 378-496 (TSSITDAGPG…PYPGGDNFDF (119 aa)) are disordered. Composition is skewed to pro residues over residues 405–470 (NPNP…PGEP) and 478–487 (APAPQHPHTP).

It belongs to the peptidase S8 family.

The protein localises to the secreted. Its function is as follows. Secreted subtilisin-like serine protease with keratinolytic activity that contributes to pathogenicity. This is Subtilisin-like protease 1 (SUB1) from Trichophyton verrucosum (strain HKI 0517).